The chain runs to 146 residues: Ribosomal RNA large subunit methyltransferase H (146 aa).

Residues Leu62, Gly94, and 113-118 (LGELTL) contribute to the S-adenosyl-L-methionine site.

Belongs to the RNA methyltransferase RlmH family. In terms of assembly, homodimer.

The protein localises to the cytoplasm. It catalyses the reaction pseudouridine(1915) in 23S rRNA + S-adenosyl-L-methionine = N(3)-methylpseudouridine(1915) in 23S rRNA + S-adenosyl-L-homocysteine + H(+). Functionally, specifically methylates the pseudouridine at position 1915 (m3Psi1915) in 23S rRNA. This is Ribosomal RNA large subunit methyltransferase H from Deinococcus radiodurans (strain ATCC 13939 / DSM 20539 / JCM 16871 / CCUG 27074 / LMG 4051 / NBRC 15346 / NCIMB 9279 / VKM B-1422 / R1).